A 289-amino-acid polypeptide reads, in one-letter code: Acetyl-coenzyme A carboxylase carboxyl transferase subunit beta (289 aa).

Residues 28 to 289 (LWSKCPSCEA…ALLQKLPAAA (262 aa)) enclose the CoA carboxyltransferase N-terminal domain. Residues C32, C35, C51, and C54 each contribute to the Zn(2+) site. The C4-type zinc-finger motif lies at 32-54 (CPSCEAVLYATDLENNLQVCPKC).

This sequence belongs to the AccD/PCCB family. Acetyl-CoA carboxylase is a heterohexamer composed of biotin carboxyl carrier protein (AccB), biotin carboxylase (AccC) and two subunits each of ACCase subunit alpha (AccA) and ACCase subunit beta (AccD). Requires Zn(2+) as cofactor.

Its subcellular location is the cytoplasm. The catalysed reaction is N(6)-carboxybiotinyl-L-lysyl-[protein] + acetyl-CoA = N(6)-biotinyl-L-lysyl-[protein] + malonyl-CoA. The protein operates within lipid metabolism; malonyl-CoA biosynthesis; malonyl-CoA from acetyl-CoA: step 1/1. Functionally, component of the acetyl coenzyme A carboxylase (ACC) complex. Biotin carboxylase (BC) catalyzes the carboxylation of biotin on its carrier protein (BCCP) and then the CO(2) group is transferred by the transcarboxylase to acetyl-CoA to form malonyl-CoA. In Dechloromonas aromatica (strain RCB), this protein is Acetyl-coenzyme A carboxylase carboxyl transferase subunit beta.